The chain runs to 908 residues: Protein translocase subunit SecA (908 aa).

ATP is bound by residues Q87, 105–109 (GEGKT), and D512. Positions 860–908 (AESLVGSSDEHEAVTAQAPMIRDGEKVGRNDPCPCGSGRKYKQCHGKLS) are disordered. Zn(2+) contacts are provided by C892, C894, C903, and H904. The segment covering 898 to 908 (RKYKQCHGKLS) has biased composition (basic residues).

It belongs to the SecA family. In terms of assembly, monomer and homodimer. Part of the essential Sec protein translocation apparatus which comprises SecA, SecYEG and auxiliary proteins SecDF-YajC and YidC. Zn(2+) is required as a cofactor.

The protein localises to the cell inner membrane. The protein resides in the cytoplasm. The enzyme catalyses ATP + H2O + cellular proteinSide 1 = ADP + phosphate + cellular proteinSide 2.. In terms of biological role, part of the Sec protein translocase complex. Interacts with the SecYEG preprotein conducting channel. Has a central role in coupling the hydrolysis of ATP to the transfer of proteins into and across the cell membrane, serving both as a receptor for the preprotein-SecB complex and as an ATP-driven molecular motor driving the stepwise translocation of polypeptide chains across the membrane. The polypeptide is Protein translocase subunit SecA (Shewanella baltica (strain OS155 / ATCC BAA-1091)).